The chain runs to 173 residues: Large ribosomal subunit protein uL16 (173 aa).

This sequence belongs to the universal ribosomal protein uL16 family.

The polypeptide is Large ribosomal subunit protein uL16 (Methanococcus maripaludis (strain C6 / ATCC BAA-1332)).